The sequence spans 934 residues: 3-hydroxy-3-methylglutaryl-coenzyme A reductase (934 aa).

At 1-111 (MFYHGASANQ…VLNLVRGAET (111 aa)) the chain is on the lumenal side. The chain crosses the membrane as a helical span at residues 112 to 132 (FDIALVTCAYIAMFYTLFNLF). The 168-residue stretch at 113–280 (DIALVTCAYI…STFLSAILSL (168 aa)) folds into the SSD domain. Residues 133–141 (ARMRAVGSK) lie on the Cytoplasmic side of the membrane. Residues 142 to 162 (VWLGLSTLVSSFFAFLFALYI) traverse the membrane as a helical segment. Residues 163 to 168 (TTRVLD) lie on the Lumenal side of the membrane. A helical membrane pass occupies residues 169–189 (LSIPFLSLSEGIPFFVAVVGF). Residues 190–231 (NNKILLAEKVLQNQLNAQSSKNDAPTVLYQALREQGPLLLRD) are Cytoplasmic-facing. A helical membrane pass occupies residues 232 to 252 (HLFMITAFLGCSFYASYLDGL). The Lumenal segment spans residues 253–256 (KNFC). A helical membrane pass occupies residues 257 to 277 (ILAALILAFDILTTSTFLSAI). Over 278–334 (LSLKLEINQIHRSTLLREQLEDDGLTETTVDDVLKSNSLAGTKTFTDAPSTLVTVAK) the chain is Cytoplasmic. Residues 335–355 (VAGVSVFFGLHFYGFGSAWLS) form a helical membrane-spanning segment. Residues 356–421 (DLSAGNETND…GLISTAARDK (66 aa)) lie on the Lumenal side of the membrane. Asparagine 361, asparagine 364, and asparagine 382 each carry an N-linked (GlcNAc...) asparagine glycan. The helical transmembrane segment at 422-442 (YISKFILFAFAVSASINVYLL) threads the bilayer. Over 443–934 (NVARIHTTRL…MQHNRAAAKK (492 aa)) the chain is Cytoplasmic. Catalysis depends on glutamate 618, which acts as the Charge relay system. Residue 624–630 (SAMRGCK) coordinates CoA. NADP(+)-binding positions include 685-687 (SRF) and 712-720 (DAMGMNMIS). Lysine 752 acts as the Charge relay system in catalysis. 781 to 783 (VLK) is a CoA binding site. The active-site Charge relay system is aspartate 828. Residue 923 to 924 (SH) coordinates CoA. Histidine 924 serves as the catalytic Proton donor. 928-929 (NR) is a binding site for NADP(+).

The protein belongs to the HMG-CoA reductase family.

The protein localises to the endoplasmic reticulum membrane. The catalysed reaction is (R)-mevalonate + 2 NADP(+) + CoA = (3S)-3-hydroxy-3-methylglutaryl-CoA + 2 NADPH + 2 H(+). It functions in the pathway metabolic intermediate biosynthesis; (R)-mevalonate biosynthesis; (R)-mevalonate from acetyl-CoA: step 3/3. Its function is as follows. HMG-CoA reductase; part of the first module of ergosterol biosynthesis pathway that includes the early steps of the pathway, conserved across all eukaryotes, and which results in the formation of mevalonate from acetyl-coenzyme A (acetyl-CoA). In this module, the cytosolic acetyl-CoA acetyltransferase catalyzes the formation of acetoacetyl-CoA. The hydroxymethylglutaryl-CoA synthase then condenses acetyl-CoA with acetoacetyl-CoA to form HMG-CoA. The rate-limiting step of the early module is the reduction to mevalonate by the 3-hydroxy-3-methylglutaryl-coenzyme A (HMG-CoA) reductase. The polypeptide is 3-hydroxy-3-methylglutaryl-coenzyme A reductase (Cyberlindnera jadinii (Torula yeast)).